A 417-amino-acid polypeptide reads, in one-letter code: 3-ketoacyl-CoA thiolase, peroxisomal (417 aa).

The N-terminal 15 residues, 1–15, are a transit peptide targeting the peroxisome; sequence MSQRLQSIKDHLVES. The interval 1–15 is PTS2-type peroxisomal targeting signal; sequence MSQRLQSIKDHLVES. Catalysis depends on C125, which acts as the Acyl-thioester intermediate. Residues H375 and C403 each act as proton acceptor in the active site.

Belongs to the thiolase-like superfamily. Thiolase family. Homodimer. Interacts (via PTS2-type peroxisomal targeting signal region) with PEX7; leading to its translocation into peroxisomes.

The protein localises to the peroxisome. It is found in the mitochondrion intermembrane space. It catalyses the reaction an acyl-CoA + acetyl-CoA = a 3-oxoacyl-CoA + CoA. The protein operates within lipid metabolism; fatty acid metabolism. Its function is as follows. Responsible for the thiolytic cleavage of straight chain 3-keto fatty acyl-CoAs (3-oxoacyl-CoAs). The sequence is that of 3-ketoacyl-CoA thiolase, peroxisomal (POT1) from Saccharomyces cerevisiae (strain ATCC 204508 / S288c) (Baker's yeast).